The primary structure comprises 285 residues: Eukaryotic translation initiation factor 3 subunit F-2 (285 aa).

An MPN domain is found at 11-145; it reads VYLKPLVFFQ…TRLYCAVEMG (135 aa).

This sequence belongs to the eIF-3 subunit F family. In terms of assembly, component of the eukaryotic translation initiation factor 3 (eIF-3) complex. The eIF-3 complex interacts with pix.

The protein localises to the cytoplasm. Its function is as follows. Component of the eukaryotic translation initiation factor 3 (eIF-3) complex, which is involved in protein synthesis of a specialized repertoire of mRNAs and, together with other initiation factors, stimulates binding of mRNA and methionyl-tRNAi to the 40S ribosome. The eIF-3 complex specifically targets and initiates translation of a subset of mRNAs involved in cell proliferation. The polypeptide is Eukaryotic translation initiation factor 3 subunit F-2 (Drosophila melanogaster (Fruit fly)).